The sequence spans 644 residues: Exoribonuclease 2 (644 aa).

An RNB domain is found at 189 to 516 (REDLTALDFV…NHRLLKAVIK (328 aa)). The S1 motif domain maps to 561–643 (DTRFAAEIVD…ETRSIIARPV (83 aa)).

This sequence belongs to the RNR ribonuclease family. RNase II subfamily.

The protein localises to the cytoplasm. The catalysed reaction is Exonucleolytic cleavage in the 3'- to 5'-direction to yield nucleoside 5'-phosphates.. Functionally, involved in mRNA degradation. Hydrolyzes single-stranded polyribonucleotides processively in the 3' to 5' direction. The chain is Exoribonuclease 2 from Escherichia coli (strain UTI89 / UPEC).